A 441-amino-acid polypeptide reads, in one-letter code: 4-hydroxy-3-methylbut-2-en-1-yl diphosphate synthase (flavodoxin) (441 aa).

Residues cysteine 320, cysteine 323, cysteine 366, and glutamate 373 each coordinate [4Fe-4S] cluster.

It belongs to the IspG family. The cofactor is [4Fe-4S] cluster.

The enzyme catalyses (2E)-4-hydroxy-3-methylbut-2-enyl diphosphate + oxidized [flavodoxin] + H2O + 2 H(+) = 2-C-methyl-D-erythritol 2,4-cyclic diphosphate + reduced [flavodoxin]. Its pathway is isoprenoid biosynthesis; isopentenyl diphosphate biosynthesis via DXP pathway; isopentenyl diphosphate from 1-deoxy-D-xylulose 5-phosphate: step 5/6. Its function is as follows. Converts 2C-methyl-D-erythritol 2,4-cyclodiphosphate (ME-2,4cPP) into 1-hydroxy-2-methyl-2-(E)-butenyl 4-diphosphate. The sequence is that of 4-hydroxy-3-methylbut-2-en-1-yl diphosphate synthase (flavodoxin) from Rhodopseudomonas palustris (strain ATCC BAA-98 / CGA009).